A 202-amino-acid polypeptide reads, in one-letter code: Small ribosomal subunit protein uS4 (202 aa).

An S4 RNA-binding domain is found at 91–168; that stretch reads SRLSSILYNS…HKVPDYLEVD (78 aa).

This sequence belongs to the universal ribosomal protein uS4 family. As to quaternary structure, part of the 30S ribosomal subunit. Contacts protein S5. The interaction surface between S4 and S5 is involved in control of translational fidelity.

Functionally, one of the primary rRNA binding proteins, it binds directly to 16S rRNA where it nucleates assembly of the body of the 30S subunit. With S5 and S12 plays an important role in translational accuracy. This is Small ribosomal subunit protein uS4 from Ehrlichia canis (strain Jake).